We begin with the raw amino-acid sequence, 225 residues long: Chlorosome protein J (225 aa).

The 2Fe-2S ferredoxin-type domain occupies 1–95 (MIIYINDKPC…TIRVLTRAEK (95 aa)). The [2Fe-2S] cluster site is built by Cys33, Cys39, Cys42, and Cys77.

[2Fe-2S] cluster is required as a cofactor.

It is found in the chlorosome. Its function is as follows. Could play a direct role in the oxidation or reduction of the quenching species formed in the chlorosome. The sequence is that of Chlorosome protein J (csmJ) from Chlorobaculum tepidum (strain ATCC 49652 / DSM 12025 / NBRC 103806 / TLS) (Chlorobium tepidum).